The following is a 121-amino-acid chain: Centrocin 2 (121 aa).

An N-terminal signal peptide occupies residues 1 to 20 (MMIKIAVVLCAVMATSMVFA). Positions 21–50 (NDVKEQELADLLDLLISEEVSSPDDAVAES) are excised as a propeptide. Residues Trp51 and Trp59 each carry the 6'-bromotryptophan modification. Cys77 and Cys112 are disulfide-bonded. The propeptide occupies 83 to 106 (SPQEARAKVLEAFPEMKESDLDEE). Position 107 is a pyrrolidone carboxylic acid (Gln107). Position 119 is a histidine amide (His119).

In terms of assembly, heterodimer of a light and a heavy chain, probably disulfide-linked.

Functionally, has antimicrobial activity against Gram-negative bacteria, Gram-positive bacteria and against fungi with minimum inhibitory concentration (MIC) between 0.78 uM and 50 uM. Shows little hemolytic activity at concentrations up to 12.5 uM but &gt;50% lysis at 100 uM. This chain is Centrocin 2, found in Echinus esculentus (Sea urchin).